The sequence spans 388 residues: L-cysteine desulfidase (388 aa).

The active-site Proton acceptor is the Cys-25. [4Fe-4S] cluster-binding residues include Cys-282, Cys-322, and Cys-329.

This sequence belongs to the L-cysteine desulfidase family. In terms of assembly, homotrimer. Requires [4Fe-4S] cluster as cofactor.

It catalyses the reaction L-cysteine + H2O = hydrogen sulfide + pyruvate + NH4(+) + H(+). Catalyzes the cleavage of L-cysteine to form 2-aminoprop-2-enoate and sulfide. The former then spontaneously hydrolyzes to pyruvate and NH(3). May be responsible for the production of sulfide required for the biosynthesis of iron-sulfur centers in this archaea. Is very specific for L-cysteine, with no activity being detected with D-cysteine, L-homocysteine, 3-mercaptopropionate (cysteine without the amino group), cysteamine (cysteine without the carboxylate), or mercaptolactate (the hydroxyl analog of cysteine). The sequence is that of L-cysteine desulfidase from Methanocaldococcus jannaschii (strain ATCC 43067 / DSM 2661 / JAL-1 / JCM 10045 / NBRC 100440) (Methanococcus jannaschii).